Consider the following 169-residue polypeptide: Ureidoglycolate lyase (169 aa).

This sequence belongs to the ureidoglycolate lyase family. In terms of assembly, homodimer. The cofactor is Ni(2+).

It carries out the reaction (S)-ureidoglycolate = urea + glyoxylate. It functions in the pathway nitrogen metabolism; (S)-allantoin degradation. Functionally, catalyzes the catabolism of the allantoin degradation intermediate (S)-ureidoglycolate, generating urea and glyoxylate. Involved in the utilization of allantoin as nitrogen source. This is Ureidoglycolate lyase from Brucella melitensis biotype 2 (strain ATCC 23457).